A 486-amino-acid chain; its full sequence is Cardiolipin synthase A (486 aa).

2 helical membrane passes run 3–23 (TFYT…IAGV) and 38–58 (MAWL…YLSL). 2 PLD phosphodiesterase domains span residues 219 to 246 (MDLR…VDPR) and 399 to 426 (EGGL…DMRS). Catalysis depends on residues histidine 224, lysine 226, aspartate 231, histidine 404, lysine 406, and aspartate 411.

This sequence belongs to the phospholipase D family. Cardiolipin synthase subfamily. ClsA sub-subfamily.

It is found in the cell inner membrane. It carries out the reaction 2 a 1,2-diacyl-sn-glycero-3-phospho-(1'-sn-glycerol) = a cardiolipin + glycerol. Its function is as follows. Catalyzes the reversible phosphatidyl group transfer from one phosphatidylglycerol molecule to another to form cardiolipin (CL) (diphosphatidylglycerol) and glycerol. This chain is Cardiolipin synthase A, found in Erwinia tasmaniensis (strain DSM 17950 / CFBP 7177 / CIP 109463 / NCPPB 4357 / Et1/99).